Consider the following 669-residue polypeptide: DNA helicase/primase complex-associated protein (669 aa).

The segment at 502–526 (RSTAGTGGEPNPRHITGPDTEGNGE) is disordered.

This sequence belongs to the herpesviridae HEPA family. As to quaternary structure, associates with the primase and the helicase to form the helicase-primase complex. Interacts with the origin-binding protein. Interacts with the polymerase catalytic subunit.

It localises to the host nucleus. Component of the helicase/primase complex. Unwinds the DNA at the replication forks and generates single-stranded DNA for both leading and lagging strand synthesis. The primase synthesizes short RNA primers on the lagging strand that the polymerase presumably elongates using dNTPs. The primase-associated factor has no known catalytic activity in the complex and may serve to facilitate the formation of the replisome by directly interacting with the origin-binding protein and the polymerase. This Human herpesvirus 8 type P (isolate GK18) (HHV-8) protein is DNA helicase/primase complex-associated protein (ORF40).